A 501-amino-acid chain; its full sequence is L-arabinose isomerase (501 aa).

Mn(2+) is bound by residues Glu-306, Glu-333, His-350, and His-449.

It belongs to the arabinose isomerase family. The cofactor is Mn(2+).

The enzyme catalyses beta-L-arabinopyranose = L-ribulose. It participates in carbohydrate degradation; L-arabinose degradation via L-ribulose; D-xylulose 5-phosphate from L-arabinose (bacterial route): step 1/3. Catalyzes the conversion of L-arabinose to L-ribulose. This chain is L-arabinose isomerase, found in Mycolicibacterium smegmatis (strain ATCC 700084 / mc(2)155) (Mycobacterium smegmatis).